We begin with the raw amino-acid sequence, 184 residues long: CDP-archaeol synthase (184 aa).

The next 5 helical transmembrane spans lie at 4 to 24, 54 to 74, 86 to 106, 122 to 142, and 145 to 165; these read IIMVLYSIFLFLPAFIANPGA, FIGGSLIGVLAGIIVYYIIYI, IISALPVLFAMSFGSLTGDIT, GSLLDQWPFVLMSFLFIFIFA, and FFLEFYGNFIAIILILVLTPP.

Belongs to the CDP-archaeol synthase family. Mg(2+) is required as a cofactor.

Its subcellular location is the cell membrane. The enzyme catalyses 2,3-bis-O-(geranylgeranyl)-sn-glycerol 1-phosphate + CTP + H(+) = CDP-2,3-bis-O-(geranylgeranyl)-sn-glycerol + diphosphate. Its pathway is membrane lipid metabolism; glycerophospholipid metabolism. Catalyzes the formation of CDP-2,3-bis-(O-geranylgeranyl)-sn-glycerol (CDP-archaeol) from 2,3-bis-(O-geranylgeranyl)-sn-glycerol 1-phosphate (DGGGP) and CTP. This reaction is the third ether-bond-formation step in the biosynthesis of archaeal membrane lipids. In Picrophilus torridus (strain ATCC 700027 / DSM 9790 / JCM 10055 / NBRC 100828 / KAW 2/3), this protein is CDP-archaeol synthase.